Reading from the N-terminus, the 660-residue chain is MKLPKPWWAGGGLLQLTILLSLVGLRVDLDLFLPPPAAALWEELLPLCPTRPASASNPFSASEGWERTPLLPAKGRLLHEVRALGVPFIPRTRVDAWLVHSVATGNADGAHGLLGTAASSAVGDGGQSASAGGGDPRAAHSSPLAAEEEEEKAAEPTAQVPDAGGCGSQENGMLREKSEAVDHSSQQEENEEGVSAQAKSRQQSKTEEHKMACASAREAEKITEARNESHLHWSDTSFSLEDLFQLLSSQPEHSLEGISVEDIPPFLSSVCESVNSSAQNINLSQAISHDVNLHEAMLLYPNNTFRRDPSARSSQAQEPFLQLNPHTNPEQATPAMSLPPFDNQMRNLTSQDLLYDLDSNIFDGINLMSLATGFSPLEVSQLFEEPDSGLSLNSSYNSTSLTNSYRIYDGTVGYNSDLQSLCHDLGAVGGCYPEPHKHCHMDHRTIAGFHVSLECQQVFHDHTYHLQSGASEPTSESFAWSEKSQKTSGCLDNPDRNLSRDEQRAKALHIPFSVDEIVRMPVDSFNSMLSRYYLTDLQVSLIRDIRRRGKNKVAAQNCRKRKLDIILNLEDDICNLQAKKEALKNEQTQCSKAIDIMRQKLHGLHQDVFNRLRDDQGRPVNPSQYALQYSHDGTVLIVPKELISSGHKKEAPKGKRERRN.

Positions 120–214 (SAVGDGGQSA…KTEEHKMACA (95 aa)) are disordered. Residues 123–135 (GDGGQSASAGGGD) are compositionally biased toward gly residues. Composition is skewed to basic and acidic residues over residues 173-186 (MLRE…HSSQ) and 204-214 (SKTEEHKMACA). The 64-residue stretch at 541 to 604 (LIRDIRRRGK…DIMRQKLHGL (64 aa)) folds into the bZIP domain. The tract at residues 543-562 (RDIRRRGKNKVAAQNCRKRK) is basic motif. Residues 566 to 573 (ILNLEDDI) are leucine-zipper.

The protein belongs to the bZIP family. CNC subfamily. In terms of assembly, heterodimer with MAFG, MAFK and other small MAF proteins that binds to the MAF recognition elements (MARE). As to expression, high level expression in brain, thymus, testis and placenta. Medium level expression in uterus, stomach and lung. Low level expression in kidney. No expression in heart, liver, spleen and ovary.

Its subcellular location is the nucleus. Activates erythroid-specific, globin gene expression. This chain is Nuclear factor erythroid 2-related factor 3 (Nfe2l3), found in Mus musculus (Mouse).